A 58-amino-acid polypeptide reads, in one-letter code: UPF0391 membrane protein MADE_1011595 (58 aa).

The next 2 helical transmembrane spans lie at 4-24 (WAIT…GGIA) and 27-47 (ATGI…ISLI).

Belongs to the UPF0391 family.

The protein resides in the cell membrane. This is UPF0391 membrane protein MADE_1011595 from Alteromonas mediterranea (strain DSM 17117 / CIP 110805 / LMG 28347 / Deep ecotype).